A 241-amino-acid chain; its full sequence is Uridylate kinase (241 aa).

Position 15-18 (15-18 (KLSG)) interacts with ATP. The tract at residues 23-28 (GAEGFG) is involved in allosteric activation by GTP. Gly57 is a binding site for UMP. Positions 58 and 62 each coordinate ATP. UMP is bound by residues Asp77 and 138–145 (TGNPFFTT). ATP contacts are provided by Thr165, Tyr171, and Asp174.

The protein belongs to the UMP kinase family. As to quaternary structure, homohexamer.

It localises to the cytoplasm. It carries out the reaction UMP + ATP = UDP + ADP. It participates in pyrimidine metabolism; CTP biosynthesis via de novo pathway; UDP from UMP (UMPK route): step 1/1. With respect to regulation, allosterically activated by GTP. Inhibited by UTP. Catalyzes the reversible phosphorylation of UMP to UDP. The sequence is that of Uridylate kinase from Yersinia pseudotuberculosis serotype O:1b (strain IP 31758).